A 496-amino-acid polypeptide reads, in one-letter code: uncharacterized protein (496 aa).

Residues Asp36, Asp81, Glu300, Glu302, Asp321, Asp323, and Asp375 each contribute to the Mg(2+) site.

The protein belongs to the XPG/RAD2 endonuclease family. FEN1 subfamily. It depends on Mg(2+) as a cofactor.

This is an uncharacterized protein from Schizosaccharomyces pombe (strain 972 / ATCC 24843) (Fission yeast).